The following is a 329-amino-acid chain: Glutamyl-Q tRNA(Asp) synthetase (329 aa).

L-glutamate is bound by residues 8–12 (RLAPS) and Glu-44. The 'HIGH' region signature appears at 11–21 (PSPTGAQHLGN). Zn(2+) contacts are provided by Cys-100, Cys-102, Tyr-129, and Cys-133. Residues Tyr-196 and Arg-214 each coordinate L-glutamate. Positions 252–256 (RLAKR) match the 'KMSKS' region motif. Lys-255 lines the ATP pocket.

The protein belongs to the class-I aminoacyl-tRNA synthetase family. GluQ subfamily. It depends on Zn(2+) as a cofactor.

Its function is as follows. Catalyzes the tRNA-independent activation of glutamate in presence of ATP and the subsequent transfer of glutamate onto a tRNA(Asp). Glutamate is transferred on the 2-amino-5-(4,5-dihydroxy-2-cyclopenten-1-yl) moiety of the queuosine in the wobble position of the QUC anticodon. In Rhodopirellula baltica (strain DSM 10527 / NCIMB 13988 / SH1), this protein is Glutamyl-Q tRNA(Asp) synthetase.